The sequence spans 907 residues: Phototropin-2 (907 aa).

The disordered stretch occupies residues 28–84 (ATAGLEIVAEDAPSGSSGAHQQQAWRPVAPATAGRDSGGTGSGKSSVDGGVGRASHD). Polar residues predominate over residues 41-51 (SGSSGAHQQQA). Positions 89-162 (VSQELKDALS…AKIRDAVKHG (74 aa)) constitute a PAS 1 domain. FMN is bound by residues 138–143 (NCRFLQ), arginine 156, asparagine 171, asparagine 181, and glutamine 202. An S-4a-FMN cysteine modification is found at cysteine 139. The region spanning 163–217 (RSFCGRLLNYRKDGAPFWNLLTVTPIRDDNGKVIKFIGMQVEVSKYTEGLSDKRM) is the PAC 1 domain. Residues 332 to 363 (RSSVGSREAPAVVEEPAPAPPPAPEVVERTDS) are disordered. The PAS 2 domain maps to 375–448 (QGIDLATTLE…DKIREAIREQ (74 aa)). Residues 424-429 (NCRFLQ), arginine 442, asparagine 457, asparagine 467, and glutamine 488 each bind FMN. The residue at position 425 (cysteine 425) is an S-4a-FMN cysteine. The region spanning 449–503 (KEITVQLINYTKSGKKFWNLFHLQPMRDQKGELQYFIGVQLDGSDHVEPLRNRLS) is the PAC 2 domain. The Protein kinase domain occupies 576–863 (FKPVKPLGCG…ANDIKQHSFF (288 aa)). Residues 582–590 (LGCGDTGSV) and lysine 605 each bind ATP. The active-site Proton acceptor is the aspartate 701.

It belongs to the protein kinase superfamily. Ser/Thr protein kinase family. In terms of assembly, homodimer. Requires FMN as cofactor. In terms of processing, autophosphorylated in response to blue light irradiation. Post-translationally, 2 molecules of FMN bind covalently to cysteines after exposure to blue light and are reversed in the dark. In terms of tissue distribution, expressed at low levels in leaves of dark-grown seedlings.

The enzyme catalyses L-seryl-[protein] + ATP = O-phospho-L-seryl-[protein] + ADP + H(+). It catalyses the reaction L-threonyl-[protein] + ATP = O-phospho-L-threonyl-[protein] + ADP + H(+). Functionally, protein kinase that acts as a blue light photoreceptor in a signal-transduction pathway for phototropic responses. Regulates a wide range of physiological activities in plants that maximize the efficiency of photosynthesis, such as chloroplast relocations, stomata opening, and leaf expansion. The sequence is that of Phototropin-2 (PHOT2) from Oryza sativa subsp. japonica (Rice).